The primary structure comprises 257 residues: Transcription factor bHLH55 (257 aa).

The region spanning Asn-74–Leu-126 is the bHLH domain.

Homodimer. Expressed in roots, leaves, stems, and flowers.

The protein localises to the nucleus. In Arabidopsis thaliana (Mouse-ear cress), this protein is Transcription factor bHLH55 (BHLH55).